Reading from the N-terminus, the 434-residue chain is Nicotinate phosphoribosyltransferase (434 aa).

The residue at position 242 (His-242) is a Phosphohistidine; by autocatalysis.

It belongs to the NAPRTase family. Post-translationally, transiently phosphorylated on a His residue during the reaction cycle. Phosphorylation strongly increases the affinity for substrates and increases the rate of nicotinate D-ribonucleotide production. Dephosphorylation regenerates the low-affinity form of the enzyme, leading to product release.

The catalysed reaction is nicotinate + 5-phospho-alpha-D-ribose 1-diphosphate + ATP + H2O = nicotinate beta-D-ribonucleotide + ADP + phosphate + diphosphate. Its pathway is cofactor biosynthesis; NAD(+) biosynthesis; nicotinate D-ribonucleotide from nicotinate: step 1/1. Its function is as follows. Catalyzes the synthesis of beta-nicotinate D-ribonucleotide from nicotinate and 5-phospho-D-ribose 1-phosphate at the expense of ATP. The polypeptide is Nicotinate phosphoribosyltransferase (Bradyrhizobium sp. (strain BTAi1 / ATCC BAA-1182)).